A 188-amino-acid polypeptide reads, in one-letter code: Elongation factor P-like protein (188 aa).

Belongs to the elongation factor P family.

This is Elongation factor P-like protein from Xylella fastidiosa (strain M23).